A 28-amino-acid polypeptide reads, in one-letter code: M-poneritoxin-Dq4b/U1-poneritoxin-Dq4c/U1-poneritoxin-Dq4d (28 aa).

At Met-20 the chain carries Methionine sulfoxide; in form U1-PONTX-Dq4d. Ala-28 is modified (alanine amide; in form Dq-1362 and U1-PONTX-Dq4d).

Occurs in 3 forms, M-PONTX-Dq4b has an amidated Ala-28, U1-PONTX-Dq4d has an amidated Ala-28 and an oxidized Met-20, U1-PONTX-Dq4c has no modifications at either Met-20 or Ala-28. In terms of tissue distribution, expressed by the venom gland.

It localises to the secreted. M-poneritoxin-Dq4b: this synthetic peptide has antimicrobial activity against Gram-positive bacteria B.amyloliquefacies S499 (MIC=0.1 mM), L.monocytogenes 2231 and S.aureus ATCC 29213, against Gram-negative bacteria P.putida BTP1, P.aeruginosa PaO1 and E.coli ATCC 10536, and against the fungi S.cerevisiae, R.mucilaginosa and C.cucumerinum. Not active against the fungi F.oxysporum and B.cinerea. In Dinoponera quadriceps (South American ant), this protein is M-poneritoxin-Dq4b/U1-poneritoxin-Dq4c/U1-poneritoxin-Dq4d.